Reading from the N-terminus, the 389-residue chain is Nucleic acid dioxygenase ALKBH1 (389 aa).

A tRNA-binding region spans residues 86 to 389; the sequence is SKWQAYGLKG…VKRARINPDS (304 aa). Residues tryptophan 144 and 175-177 each bind substrate; that span reads YHY. One can recognise a Fe2OG dioxygenase domain in the interval 208 to 347; it reads GFEDFRAEAG…RVNMTVRQVL (140 aa). 2-oxoglutarate is bound at residue 220–222; sequence NYY. Residues histidine 231, aspartate 233, and histidine 287 each coordinate Fe cation. Aspartate 233 provides a ligand contact to substrate. Residue 338–344 coordinates 2-oxoglutarate; sequence RVNMTVR.

This sequence belongs to the alkB family. Monomer. Interacts with DNAJB6. Requires Fe(2+) as cofactor. As to expression, ubiquitous.

It localises to the nucleus. The protein localises to the mitochondrion. It catalyses the reaction 2'-deoxyribonucleotide-(2'-deoxyribose 5'-phosphate)-2'-deoxyribonucleotide-DNA = a 3'-end 2'-deoxyribonucleotide-(2,3-dehydro-2,3-deoxyribose 5'-phosphate)-DNA + a 5'-end 5'-phospho-2'-deoxyribonucleoside-DNA + H(+). The catalysed reaction is a methylated nucleobase within DNA + 2-oxoglutarate + O2 = a nucleobase within DNA + formaldehyde + succinate + CO2. It carries out the reaction an N(6)-methyl-2'-deoxyadenosine in DNA + 2-oxoglutarate + O2 = a 2'-deoxyadenosine in DNA + formaldehyde + succinate + CO2. The enzyme catalyses an N(1)-methyladenosine in tRNA + 2-oxoglutarate + O2 = an adenosine in tRNA + formaldehyde + succinate + CO2. It catalyses the reaction 5-methylcytidine(34) in mitochondrial tRNA(Met) + 2 2-oxoglutarate + 2 O2 = 5-formylcytidine(34) in mitochondrial tRNA(Met) + 2 succinate + 2 CO2 + H2O. The catalysed reaction is an N(3)-methylcytidine in mRNA + 2-oxoglutarate + O2 = a cytidine in mRNA + formaldehyde + succinate + CO2. It carries out the reaction N(1)-methyladenosine(58) in tRNA + 2-oxoglutarate + O2 = adenosine(58) in tRNA + formaldehyde + succinate + CO2. Its function is as follows. Dioxygenase that acts on nucleic acids, such as DNA and tRNA. Requires molecular oxygen, alpha-ketoglutarate and iron. A number of activities have been described for this dioxygenase, but recent results suggest that it mainly acts on tRNAs and mediates their demethylation or oxidation depending on the context and subcellular compartment. Mainly acts as a tRNA demethylase by removing N(1)-methyladenine from various tRNAs, with a preference for N(1)-methyladenine at position 58 (m1A58) present on a stem loop structure of tRNAs. Acts as a regulator of translation initiation and elongation in response to glucose deprivation: regulates both translation initiation, by mediating demethylation of tRNA(Met), and translation elongation, N(1)-methyladenine-containing tRNAs being preferentially recruited to polysomes to promote translation elongation. In mitochondrion, specifically interacts with mt-tRNA(Met) and mediates oxidation of mt-tRNA(Met) methylated at cytosine(34) to form 5-formylcytosine (f(5)c) at this position. mt-tRNA(Met) containing the f(5)c modification at the wobble position enables recognition of the AUA codon in addition to the AUG codon, expanding codon recognition in mitochondrial translation. Specifically demethylates DNA methylated on the 6th position of adenine (N(6)-methyladenosine) DNA. N(6)-methyladenosine (m6A) DNA is present at some L1 elements in embryonic stem cells and probably promotes their silencing. Demethylates mRNAs containing N(3)-methylcytidine modification. Also able to repair alkylated single-stranded DNA by oxidative demethylation, but with low activity. Also has DNA lyase activity and introduces double-stranded breaks at abasic sites: cleaves both single-stranded DNA and double-stranded DNA at abasic sites, with the greatest activity towards double-stranded DNA with two abasic sites. DNA lyase activity does not require alpha-ketoglutarate and iron and leads to the formation of an irreversible covalent protein-DNA adduct with the 5' DNA product. DNA lyase activity is not required during base excision repair and class switch recombination of the immunoglobulin heavy chain during B lymphocyte activation. May play a role in placental trophoblast lineage differentiation. The protein is Nucleic acid dioxygenase ALKBH1 of Homo sapiens (Human).